A 433-amino-acid polypeptide reads, in one-letter code: Enolase (433 aa).

Residue Gln167 coordinates (2R)-2-phosphoglycerate. Catalysis depends on Glu209, which acts as the Proton donor. Residues Asp246, Glu291, and Asp318 each contribute to the Mg(2+) site. Lys326 is subject to N6-acetyllysine. Positions 343, 372, 373, and 394 each coordinate (2R)-2-phosphoglycerate. Lys343 acts as the Proton acceptor in catalysis. N6-(2-hydroxyisobutyryl)lysine is present on Lys343.

Belongs to the enolase family. Component of the RNA degradosome, a multiprotein complex involved in RNA processing and mRNA degradation. It depends on Mg(2+) as a cofactor. Post-translationally, acetylated and 2-hydroxyisobutyrylated at Lys-326 and Lys-343, respectively, reducing the enolase activity. Deacetylated and de-2-hydroxyisobutyrylated by NpdA/CobB, increasing the enolase activity.

Its subcellular location is the cytoplasm. It localises to the secreted. The protein localises to the cell surface. It carries out the reaction (2R)-2-phosphoglycerate = phosphoenolpyruvate + H2O. It participates in carbohydrate degradation; glycolysis; pyruvate from D-glyceraldehyde 3-phosphate: step 4/5. In terms of biological role, catalyzes the reversible conversion of 2-phosphoglycerate (2-PG) into phosphoenolpyruvate (PEP). It is essential for the degradation of carbohydrates via glycolysis. This Proteus mirabilis (strain HI4320) protein is Enolase.